The sequence spans 132 residues: tRNA (cytidine(56)-2'-O)-methyltransferase (132 aa).

S-adenosyl-L-methionine contacts are provided by residues Leu35, 65–69 (GSEKV), and 83–90 (IGNQPHSE).

The protein belongs to the aTrm56 family. In terms of assembly, homodimer.

It is found in the cytoplasm. The enzyme catalyses cytidine(56) in tRNA + S-adenosyl-L-methionine = 2'-O-methylcytidine(56) in tRNA + S-adenosyl-L-homocysteine + H(+). Its function is as follows. Specifically catalyzes the AdoMet-dependent 2'-O-ribose methylation of cytidine at position 56 in tRNAs. In Sulfolobus acidocaldarius (strain ATCC 33909 / DSM 639 / JCM 8929 / NBRC 15157 / NCIMB 11770), this protein is tRNA (cytidine(56)-2'-O)-methyltransferase.